Consider the following 307-residue polypeptide: Undecaprenyl-diphosphatase (307 aa).

6 helical membrane-spanning segments follow: residues 40–60, 79–99, 107–127, 183–203, 219–239, and 249–269; these read AAKTLDIVIQLGAVLAVVVYF, LRLALALAFAFLPAAVVGLLF, LFGPGPVAAALIVGGFLMIGV, AAAAEFSFLLAIPTLGAATVF, IVALVVGLAVSFAVALLVIAV, and LAPFGWYRIALGALVLWLWIA.

The protein belongs to the UppP family.

It is found in the cell inner membrane. It catalyses the reaction di-trans,octa-cis-undecaprenyl diphosphate + H2O = di-trans,octa-cis-undecaprenyl phosphate + phosphate + H(+). In terms of biological role, catalyzes the dephosphorylation of undecaprenyl diphosphate (UPP). Confers resistance to bacitracin. This chain is Undecaprenyl-diphosphatase, found in Sorangium cellulosum (strain So ce56) (Polyangium cellulosum (strain So ce56)).